Consider the following 214-residue polypeptide: Thymidylate kinase (214 aa).

9-16 (GVDGSGKS) provides a ligand contact to ATP.

The protein belongs to the thymidylate kinase family.

It carries out the reaction dTMP + ATP = dTDP + ADP. Phosphorylation of dTMP to form dTDP in both de novo and salvage pathways of dTTP synthesis. The chain is Thymidylate kinase from Symbiobacterium thermophilum (strain DSM 24528 / JCM 14929 / IAM 14863 / T).